A 454-amino-acid chain; its full sequence is Chromosomal replication initiator protein DnaA (454 aa).

Residues 1 to 80 form a domain I, interacts with DnaA modulators region; it reads MNLSNLWQSC…NPELRISLKE (80 aa). The tract at residues 80–117 is domain II; sequence EGVKPAPKIVESTPNTSLRSESAVDFQAESSASVKFES. Positions 118–335 are domain III, AAA+ region; it reads HLNTKHLFDN…GALNRVKAMQ (218 aa). The ATP site is built by G163, G165, K166, and T167. The segment at 336-454 is domain IV, binds dsDNA; it reads DFKGGDIDID…WANLIRTLSA (119 aa).

Belongs to the DnaA family. Oligomerizes as a right-handed, spiral filament on DNA at oriC.

Its subcellular location is the cytoplasm. Its function is as follows. Plays an essential role in the initiation and regulation of chromosomal replication. ATP-DnaA binds to the origin of replication (oriC) to initiate formation of the DNA replication initiation complex once per cell cycle. Binds the DnaA box (a 9 base pair repeat at the origin) and separates the double-stranded (ds)DNA. Forms a right-handed helical filament on oriC DNA; dsDNA binds to the exterior of the filament while single-stranded (ss)DNA is stabiized in the filament's interior. The ATP-DnaA-oriC complex binds and stabilizes one strand of the AT-rich DNA unwinding element (DUE), permitting loading of DNA polymerase. After initiation quickly degrades to an ADP-DnaA complex that is not apt for DNA replication. Binds acidic phospholipids. This Haemophilus influenzae (strain ATCC 51907 / DSM 11121 / KW20 / Rd) protein is Chromosomal replication initiator protein DnaA.